Here is a 155-residue protein sequence, read N- to C-terminus: Ribosome maturation factor RimP (155 aa).

It belongs to the RimP family.

It localises to the cytoplasm. In terms of biological role, required for maturation of 30S ribosomal subunits. The polypeptide is Ribosome maturation factor RimP (Listeria innocua serovar 6a (strain ATCC BAA-680 / CLIP 11262)).